Consider the following 315-residue polypeptide: Uracil-DNA glycosylase (315 aa).

Over residues 35–80 the composition is skewed to low complexity; that stretch reads AAAAAPAGAGAGASKPARPPAAARPAKGTPAASAATTATGADASAP. Residues 35–88 form a disordered region; it reads AAAAAPAGAGAGASKPARPPAAARPAKGTPAASAATTATGADASAPAPDPGAPT. Asp-158 (proton acceptor) is an active-site residue.

Belongs to the uracil-DNA glycosylase (UDG) superfamily. UNG family.

Its subcellular location is the host nucleus. The catalysed reaction is Hydrolyzes single-stranded DNA or mismatched double-stranded DNA and polynucleotides, releasing free uracil.. Its function is as follows. Excises uracil residues from the DNA which can arise as a result of misincorporation of dUMP residues by DNA polymerase or deamination of cytosines. Therefore may reduce deleterious uracil incorporation into the viral genome, particularly in terminally differentiated cells which lack DNA repair enzymes. In Suid herpesvirus 1 (strain Indiana-Funkhauser / Becker) (SuHV-1), this protein is Uracil-DNA glycosylase (UL2).